The primary structure comprises 90 residues: Small ribosomal subunit protein bS20 (90 aa).

The tract at residues Met-1–Met-28 is disordered.

The protein belongs to the bacterial ribosomal protein bS20 family.

Functionally, binds directly to 16S ribosomal RNA. This is Small ribosomal subunit protein bS20 from Rhodopirellula baltica (strain DSM 10527 / NCIMB 13988 / SH1).